The following is a 69-amino-acid chain: DNA-directed RNA polymerase subunit omega (69 aa).

This sequence belongs to the RNA polymerase subunit omega family. In terms of assembly, the RNAP catalytic core consists of 2 alpha, 1 beta, 1 beta' and 1 omega subunit. When a sigma factor is associated with the core the holoenzyme is formed, which can initiate transcription.

It carries out the reaction RNA(n) + a ribonucleoside 5'-triphosphate = RNA(n+1) + diphosphate. Promotes RNA polymerase assembly. Latches the N- and C-terminal regions of the beta' subunit thereby facilitating its interaction with the beta and alpha subunits. This Carboxydothermus hydrogenoformans (strain ATCC BAA-161 / DSM 6008 / Z-2901) protein is DNA-directed RNA polymerase subunit omega.